Consider the following 368-residue polypeptide: Zinc finger protein 24 (368 aa).

A Glycyl lysine isopeptide (Lys-Gly) (interchain with G-Cter in SUMO2) cross-link involves residue lysine 22. Lysine 27 is covalently cross-linked (Glycyl lysine isopeptide (Lys-Gly) (interchain with G-Cter in SUMO1); alternate). Residue lysine 27 forms a Glycyl lysine isopeptide (Lys-Gly) (interchain with G-Cter in SUMO2); alternate linkage. The 83-residue stretch at 52–134 (RQRFRQFGYQ…TVLEDLESEL (83 aa)) folds into the SCAN box domain. Residues serine 132 and serine 142 each carry the phosphoserine modification. Residues lysine 147, lysine 177, and lysine 236 each participate in a glycyl lysine isopeptide (Lys-Gly) (interchain with G-Cter in SUMO2) cross-link. The segment at 251 to 273 (HICDECGKHFSQGSALILHQRIH) adopts a C2H2-type 1 zinc-finger fold. A necessary and sufficient for nuclear localization region spans residues 251-301 (HICDECGKHFSQGSALILHQRIHSGEKPYGCVECGKAFSRSSILVQHQRVH). Serine 274 carries the phosphoserine modification. Residues lysine 277 and lysine 286 each participate in a glycyl lysine isopeptide (Lys-Gly) (interchain with G-Cter in SUMO2) cross-link. C2H2-type zinc fingers lie at residues 279-301 (YGCV…QRVH), 307-329 (YKCL…QRIH), and 335-357 (YECV…QRRH). Serine 292 carries the post-translational modification Phosphoserine. Tyrosine 335 is subject to Phosphotyrosine. Residues lysine 361 and lysine 367 each participate in a glycyl lysine isopeptide (Lys-Gly) (interchain with G-Cter in SUMO2) cross-link.

The protein belongs to the krueppel C2H2-type zinc-finger protein family. Post-translationally, sumoylated. Expressed in many tissues except in heart.

It localises to the nucleus. Its function is as follows. Transcription factor required for myelination of differentiated oligodendrocytes. Required for the conversion of oligodendrocytes from the premyelinating to the myelinating state. In the developing central nervous system (CNS), involved in the maintenance in the progenitor stage by promoting the cell cycle. Specifically binds to the 5'-TCAT-3' DNA sequence. Has transcription repressor activity in vitro. The chain is Zinc finger protein 24 (ZNF24) from Homo sapiens (Human).